A 95-amino-acid chain; its full sequence is Beta-defensin 132 (95 aa).

Residues 1 to 22 (MKFLLLVLAALRFLTQVIPASA) form the signal peptide. 3 disulfide bridges follow: C27–C55, C35–C49, and C39–C56. Positions 72–95 (GNHWQSRRRNTQRKDKKQQTTVTS) are disordered. Over residues 76 to 87 (QSRRRNTQRKDK) the composition is skewed to basic residues.

This sequence belongs to the beta-defensin family.

The protein resides in the secreted. Has antibacterial activity. This Pongo pygmaeus (Bornean orangutan) protein is Beta-defensin 132 (DEFB132).